The primary structure comprises 187 residues: Putative acyl-coenzyme A oxidase At3g06690 (187 aa).

The segment at 1–21 is disordered; the sequence is MTKEPIYSPRMLHRDPDSPRP.

The protein belongs to the acyl-CoA oxidase family.

It catalyses the reaction a 2,3-saturated acyl-CoA + O2 = a (2E)-enoyl-CoA + H2O2. This Arabidopsis thaliana (Mouse-ear cress) protein is Putative acyl-coenzyme A oxidase At3g06690.